We begin with the raw amino-acid sequence, 553 residues long: Formate--tetrahydrofolate ligase (553 aa).

64-71 contacts ATP; the sequence is TPAGEGKT.

The protein belongs to the formate--tetrahydrofolate ligase family.

The catalysed reaction is (6S)-5,6,7,8-tetrahydrofolate + formate + ATP = (6R)-10-formyltetrahydrofolate + ADP + phosphate. Its pathway is one-carbon metabolism; tetrahydrofolate interconversion. This chain is Formate--tetrahydrofolate ligase, found in Pseudothermotoga lettingae (strain ATCC BAA-301 / DSM 14385 / NBRC 107922 / TMO) (Thermotoga lettingae).